The primary structure comprises 342 residues: Ribosomal RNA small subunit methyltransferase C (342 aa).

The protein belongs to the methyltransferase superfamily. RsmC family. As to quaternary structure, monomer.

It is found in the cytoplasm. It carries out the reaction guanosine(1207) in 16S rRNA + S-adenosyl-L-methionine = N(2)-methylguanosine(1207) in 16S rRNA + S-adenosyl-L-homocysteine + H(+). In terms of biological role, specifically methylates the guanine in position 1207 of 16S rRNA in the 30S particle. The chain is Ribosomal RNA small subunit methyltransferase C from Enterobacter sp. (strain 638).